A 65-amino-acid polypeptide reads, in one-letter code: Prokaryotic ubiquitin-like protein Pup (65 aa).

Positions 1 to 14 are enriched in basic and acidic residues; sequence MSGHEQQRPSRREE. A disordered region spans residues 1-35; it reads MSGHEQQRPSRREEDVEETPVVPAQAGAQAKESDA. The ARC ATPase binding stretch occupies residues 21–59; that stretch reads VVPAQAGAQAKESDADVDALLDEIDEVLESNSEEFVRGF. The stretch at 26–49 forms a coiled coil; the sequence is AGAQAKESDADVDALLDEIDEVLE. Gln65 is subject to Deamidated glutamine. Gln65 is covalently cross-linked (Isoglutamyl lysine isopeptide (Gln-Lys) (interchain with K-? in acceptor proteins)).

Belongs to the prokaryotic ubiquitin-like protein family. In terms of assembly, strongly interacts with the proteasome-associated ATPase ARC through a hydrophobic interface; the interacting region of Pup lies in its C-terminal half. There is one Pup binding site per ARC hexamer ring. Is modified by deamidation of its C-terminal glutamine to glutamate by the deamidase Dop, a prerequisite to the subsequent pupylation process.

Its pathway is protein degradation; proteasomal Pup-dependent pathway. Functionally, protein modifier that is covalently attached to lysine residues of substrate proteins, thereby targeting them for proteasomal degradation. The tagging system is termed pupylation. The chain is Prokaryotic ubiquitin-like protein Pup from Kineococcus radiotolerans (strain ATCC BAA-149 / DSM 14245 / SRS30216).